Here is a 122-residue protein sequence, read N- to C-terminus: Small ribosomal subunit protein uS13 (122 aa).

A disordered region spans residues 96-122; the sequence is LPVHGQRTKTNARTRKGPARTVAGKKK.

The protein belongs to the universal ribosomal protein uS13 family. As to quaternary structure, part of the 30S ribosomal subunit. Forms a loose heterodimer with protein S19. Forms two bridges to the 50S subunit in the 70S ribosome.

Its function is as follows. Located at the top of the head of the 30S subunit, it contacts several helices of the 16S rRNA. In the 70S ribosome it contacts the 23S rRNA (bridge B1a) and protein L5 of the 50S subunit (bridge B1b), connecting the 2 subunits; these bridges are implicated in subunit movement. Contacts the tRNAs in the A and P-sites. In Geotalea daltonii (strain DSM 22248 / JCM 15807 / FRC-32) (Geobacter daltonii), this protein is Small ribosomal subunit protein uS13.